The sequence spans 274 residues: Large ribosomal subunit protein uL2cz/uL2cy (274 aa).

The tract at residues 225–274 (PVDHPHGGGEGRAPIGRKKPVTPWGYPALGRRSRKRKKYSDNLILRRRTK) is disordered.

It belongs to the universal ribosomal protein uL2 family. As to quaternary structure, part of the 50S ribosomal subunit.

It localises to the plastid. The protein localises to the chloroplast. The chain is Large ribosomal subunit protein uL2cz/uL2cy (rpl2-A) from Lotus japonicus (Lotus corniculatus var. japonicus).